A 346-amino-acid polypeptide reads, in one-letter code: Peroxidase 37 (346 aa).

Residues 1 to 22 form the signal peptide; sequence MHSSLIKLGFLLLLIQVSLSHA. Pyrrolidone carboxylic acid is present on Gln-23. 4 disulfide bridges follow: Cys-33/Cys-113, Cys-66/Cys-71, Cys-119/Cys-323, and Cys-199/Cys-231. His-64 acts as the Proton acceptor in catalysis. Ca(2+) contacts are provided by Asp-65, Val-68, Gly-70, Asp-72, and Ser-74. A glycan (N-linked (GlcNAc...) asparagine) is linked at Asn-79. Substrate is bound at residue Pro-161. His-192 is a heme b binding site. Residue Thr-193 coordinates Ca(2+). 2 N-linked (GlcNAc...) asparagine glycosylation sites follow: Asn-208 and Asn-236. Asp-244, Thr-247, and Asp-252 together coordinate Ca(2+).

It belongs to the peroxidase family. Classical plant (class III) peroxidase subfamily. Heme b is required as a cofactor. Requires Ca(2+) as cofactor.

It is found in the secreted. Its subcellular location is the vacuole. It catalyses the reaction 2 a phenolic donor + H2O2 = 2 a phenolic radical donor + 2 H2O. In terms of biological role, removal of H(2)O(2), oxidation of toxic reductants, biosynthesis and degradation of lignin, suberization, auxin catabolism, response to environmental stresses such as wounding, pathogen attack and oxidative stress. These functions might be dependent on each isozyme/isoform in each plant tissue. This chain is Peroxidase 37 (PER37), found in Arabidopsis thaliana (Mouse-ear cress).